Consider the following 1544-residue polypeptide: Lysine-specific demethylase 5B (1544 aa).

The JmjN domain occupies 32 to 73 (CPVFEPSWEEFADPFAFIHKIRPIAEQTGICKVRPPPDWQPP). Residues 97-187 (TRVKLNFLDQ…ILNPYNLFLS (91 aa)) form the ARID domain. Residues Lys-148, Lys-204, Lys-209, Lys-242, Lys-274, and Lys-278 each participate in a glycyl lysine isopeptide (Lys-Gly) (interchain with G-Cter in SUMO2) cross-link. The interval 201–230 (TDTKDKEYKPHDIPQRQSVQPSETCPPARR) is disordered. The segment covering 202-214 (DTKDKEYKPHDIP) has biased composition (basic and acidic residues). The PHD-type 1 zinc-finger motif lies at 309-359 (LYVCLLCGSGNDEDRLLLCDGCDDSYHTFCLIPPLHDVPKGDWRCPKCLAQ). Tyr-425 provides a ligand contact to 2-oxoglutarate. Residues 453–619 (EYLDSGWNLN…LGRQCVEHYR (167 aa)) enclose the JmjC domain. Positions 499 and 501 each coordinate Fe cation. 2-oxoglutarate-binding residues include Ser-507, Asn-509, and Lys-517. His-587 serves as a coordination point for Fe cation. The C5HC2 zinc-finger motif lies at 692 to 744 (CVKCKTTCFMSAISCSCKPGLLVCLHHVKELCSCPPYKYKLRYRYTLDDLYPM). Lys-769 participates in a covalent cross-link: Glycyl lysine isopeptide (Lys-Gly) (interchain with G-Cter in SUMO2). An N6-acetyllysine modification is found at Lys-832. Ser-986 carries the post-translational modification Phosphoserine. A PHD-type 2 zinc finger spans residues 1176–1224 (IKICLCQKAPAAPMIQCELCRDAFHTSCVAVPSISQGLRIWLCPHCRRS). Position 1328 is a phosphoserine (Ser-1328). The disordered stretch occupies residues 1374-1400 (PSPAQQTDRSSPVRPSSEKNDCCRGKR). Over residues 1376–1387 (PAQQTDRSSPVR) the composition is skewed to polar residues. Residues 1389-1400 (SSEKNDCCRGKR) show a composition bias toward basic and acidic residues. Residue Lys-1450 forms a Glycyl lysine isopeptide (Lys-Gly) (interchain with G-Cter in SUMO2) linkage. At Ser-1456 the chain carries Phosphoserine. Residues 1484–1538 (DAICPAVSCLQPEGDEVDWVQCDGSCNQWFHQVCVGVSPEMAEKEDYICVRCTVK) form a PHD-type 3 zinc finger.

The protein belongs to the JARID1 histone demethylase family. As to quaternary structure, interacts with FOXG1B, PAX9, MYC, MYCN and RB1. Interacts with HDAC1, HDAC4, HDAC5 and HDAC7. Interacts (via PHD-type 1 zinc finger) with histone H3 unmodified at 'Lys-4'; the interaction is inhibited when histone H3 is methylated at 'Arg-2' or 'Lys-4'. Fe(2+) serves as cofactor. Ubiquitously expressed, with highest levels in testis. Down-regulated in melanoma and glioblastoma. Up-regulated in breast cancer (at protein level).

The protein resides in the nucleus. The enzyme catalyses N(6),N(6),N(6)-trimethyl-L-lysyl(4)-[histone H3] + 3 2-oxoglutarate + 3 O2 = L-lysyl(4)-[histone H3] + 3 formaldehyde + 3 succinate + 3 CO2. Its activity is regulated as follows. Several specific inhibitors are being developed and tested. The inhibitor KDOAM-25 inhibits its demethylase activity, resulting to cell cycle arrest in myeloma cells. Histone demethylase that demethylates 'Lys-4' of histone H3, thereby playing a central role in histone code. Does not demethylate histone H3 'Lys-9' or H3 'Lys-27'. Demethylates trimethylated, dimethylated and monomethylated H3 'Lys-4'. Acts as a transcriptional corepressor for FOXG1B and PAX9. Favors the proliferation of breast cancer cells by repressing tumor suppressor genes such as BRCA1 and HOXA5. In contrast, may act as a tumor suppressor for melanoma. Represses the CLOCK-BMAL1 heterodimer-mediated transcriptional activation of the core clock component PER2. The polypeptide is Lysine-specific demethylase 5B (KDM5B) (Homo sapiens (Human)).